The chain runs to 317 residues: Lactamase-like protein adaB (317 aa).

Residues His97, His99, Asp101, and His102 each coordinate Zn(2+). Asp101 acts as the Proton donor/acceptor in catalysis.

Belongs to the metallo-beta-lactamase superfamily. It depends on Zn(2+) as a cofactor.

The enzyme catalyses 3-(2,4-dioxopentyl)-2,3,6,8,9-pentahydroxy-1-oxo-1,2,3,4-tetrahydroanthracene-2-carboxyl-[ACP] = 2-acetyl-3,4a,8,10,11,12a-hexahydroxy-1,4,4a,5,12,12a-hexahydrotetracene-1,12-dione + holo-[ACP] + H(+). The protein operates within secondary metabolite biosynthesis. Lactamase-like protein; part of the gene cluster that mediates the biosynthesis of the linear tetracyclic TAN-1612 neuropeptide Y receptor antagonist. The decaketide backbone of TAN-1612 is synthesized by the non-reducing polyketide synthase adaA via condensation of one acetyl-CoA starter unit with 9 malonyl-CoA units. The FAD-dependent monooxygenase adaC then performs hydroxylation at C2 while the polaketide chain is still attached to the NRPKS adaA. The alpha-hydroxylation step at C2 appears to be crucial for the following C18-C1 Claisen cyclization and release of the C9-hydroxyl version of TAN-1612 from the NRPKS adaA, two steps performed by the lactamase-like protein adaB. Finally, the O-methyltransferase adaD performs the C9 O-methylation to complete the biosynthesis of TAN-1612. The protein is Lactamase-like protein adaB of Aspergillus niger (strain ATCC MYA-4892 / CBS 513.88 / FGSC A1513).